The chain runs to 120 residues: Cell cycle protein GpsB (120 aa).

Positions leucine 32–alanine 68 form a coiled coil. The segment at lysine 63–serine 88 is disordered. Residues alanine 68–valine 86 are compositionally biased toward low complexity.

The protein belongs to the GpsB family. In terms of assembly, forms polymers through the coiled coil domains. Interacts with PBP1, MreC and EzrA.

Its subcellular location is the cytoplasm. In terms of biological role, divisome component that associates with the complex late in its assembly, after the Z-ring is formed, and is dependent on DivIC and PBP2B for its recruitment to the divisome. Together with EzrA, is a key component of the system that regulates PBP1 localization during cell cycle progression. Its main role could be the removal of PBP1 from the cell pole after pole maturation is completed. Also contributes to the recruitment of PBP1 to the division complex. Not essential for septum formation. The chain is Cell cycle protein GpsB from Streptococcus sanguinis (strain SK36).